A 106-amino-acid chain; its full sequence is ATP-dependent Clp protease adapter protein ClpS (106 aa).

It belongs to the ClpS family. As to quaternary structure, binds to the N-terminal domain of the chaperone ClpA.

Functionally, involved in the modulation of the specificity of the ClpAP-mediated ATP-dependent protein degradation. The sequence is that of ATP-dependent Clp protease adapter protein ClpS from Salmonella agona (strain SL483).